A 24-amino-acid polypeptide reads, in one-letter code: Neurotoxin 5 (24 aa).

Positions 2 to 24 (RDAYIAQNYNCVYTCFKNDYCND) constitute an LCN-type CS-alpha/beta domain.

It belongs to the long (4 C-C) scorpion toxin superfamily. Sodium channel inhibitor family. Alpha subfamily. As to expression, expressed by the venom gland.

The protein resides in the secreted. In terms of biological role, binds to sodium channels (Nav) and inhibits the inactivation of the activated channels, thereby blocking neuronal transmission. In Buthus occitanus tunetanus (Common European scorpion), this protein is Neurotoxin 5.